The following is a 487-amino-acid chain: Betaine aldehyde dehydrogenase (487 aa).

2 residues coordinate K(+): Ile-27 and Asp-93. 149 to 151 (GAW) contacts NAD(+). The active-site Charge relay system is the Lys-161. NAD(+) contacts are provided by residues 175–178 (KPSE) and 228–231 (SVPT). Leu-243 lines the K(+) pocket. Glu-249 acts as the Proton acceptor in catalysis. Residues Gly-251, Cys-283, and Glu-384 each contribute to the NAD(+) site. The active-site Nucleophile is Cys-283. At Cys-283 the chain carries Cysteine sulfenic acid (-SOH). Residues Lys-454 and Gly-457 each contribute to the K(+) site. The active-site Charge relay system is the Glu-461.

It belongs to the aldehyde dehydrogenase family. In terms of assembly, dimer of dimers. Requires K(+) as cofactor.

It carries out the reaction betaine aldehyde + NAD(+) + H2O = glycine betaine + NADH + 2 H(+). Its pathway is amine and polyamine biosynthesis; betaine biosynthesis via choline pathway; betaine from betaine aldehyde: step 1/1. Its function is as follows. Involved in the biosynthesis of the osmoprotectant glycine betaine. Catalyzes the irreversible oxidation of betaine aldehyde to the corresponding acid. This is Betaine aldehyde dehydrogenase from Brucella anthropi (strain ATCC 49188 / DSM 6882 / CCUG 24695 / JCM 21032 / LMG 3331 / NBRC 15819 / NCTC 12168 / Alc 37) (Ochrobactrum anthropi).